The primary structure comprises 316 residues: Phosphoribosylaminoimidazole-succinocarboxamide synthase (316 aa).

It belongs to the SAICAR synthetase family.

It carries out the reaction 5-amino-1-(5-phospho-D-ribosyl)imidazole-4-carboxylate + L-aspartate + ATP = (2S)-2-[5-amino-1-(5-phospho-beta-D-ribosyl)imidazole-4-carboxamido]succinate + ADP + phosphate + 2 H(+). The protein operates within purine metabolism; IMP biosynthesis via de novo pathway; 5-amino-1-(5-phospho-D-ribosyl)imidazole-4-carboxamide from 5-amino-1-(5-phospho-D-ribosyl)imidazole-4-carboxylate: step 1/2. The chain is Phosphoribosylaminoimidazole-succinocarboxamide synthase from Flavobacterium psychrophilum (strain ATCC 49511 / DSM 21280 / CIP 103535 / JIP02/86).